The primary structure comprises 504 residues: L-amino-acid oxidase (504 aa).

An N-terminal signal peptide occupies residues 1 to 18 (MNIFFMFSLLFLATLGSC). Cys28 and Cys191 are disulfide-bonded. FAD-binding positions include 61–62 (MS), 81–82 (EA), Arg89, and 105–108 (GPMR). Arg108 is a substrate binding site. N-linked (GlcNAc...) asparagine glycosylation occurs at Asn190. His241 contributes to the substrate binding site. Val279 serves as a coordination point for FAD. A disulfide bridge connects residues Cys349 and Cys430. Asn379 carries an N-linked (GlcNAc...) asparagine glycan. Substrate is bound at residue Tyr390. FAD-binding positions include Glu475 and 482 to 487 (GWIDST). Substrate is bound at residue 482 to 483 (GW).

It belongs to the flavin monoamine oxidase family. FIG1 subfamily. In terms of assembly, homodimer; non-covalently linked. FAD is required as a cofactor. Expressed by the venom gland.

The protein localises to the secreted. It carries out the reaction an L-alpha-amino acid + O2 + H2O = a 2-oxocarboxylate + H2O2 + NH4(+). In terms of biological role, catalyzes an oxidative deamination of predominantly hydrophobic and aromatic L-amino acids, thus producing hydrogen peroxide that may contribute to the diverse toxic effects of this enzyme. Exhibits diverse biological activities, such as hemorrhage, hemolysis, edema, apoptosis of vascular endothelial cells or tumor cell lines, antibacterial and antiparasitic activities, as well as regulation of platelet aggregation. Its effect on platelets is controversial, since it either induces aggregation or inhibits agonist-induced aggregation. These different effects are probably due to different experimental conditions. This Echis ocellatus (Ocellated saw-scaled viper) protein is L-amino-acid oxidase.